Here is a 168-residue protein sequence, read N- to C-terminus: Xanthine-guanine phosphoribosyltransferase (168 aa).

Residues 43-44 (RG) and 102-110 (DDLVDTGAT) each bind 5-phospho-alpha-D-ribose 1-diphosphate. Residue Asp-103 participates in Mg(2+) binding. Asp-106 and Ile-149 together coordinate guanine. The xanthine site is built by Asp-106 and Ile-149. GMP is bound by residues 106-110 (DTGAT) and 148-149 (WI).

The protein belongs to the purine/pyrimidine phosphoribosyltransferase family. XGPT subfamily. As to quaternary structure, homotetramer. The cofactor is Mg(2+).

It is found in the cell inner membrane. The enzyme catalyses GMP + diphosphate = guanine + 5-phospho-alpha-D-ribose 1-diphosphate. The catalysed reaction is XMP + diphosphate = xanthine + 5-phospho-alpha-D-ribose 1-diphosphate. It carries out the reaction IMP + diphosphate = hypoxanthine + 5-phospho-alpha-D-ribose 1-diphosphate. It participates in purine metabolism; GMP biosynthesis via salvage pathway; GMP from guanine: step 1/1. The protein operates within purine metabolism; XMP biosynthesis via salvage pathway; XMP from xanthine: step 1/1. In terms of biological role, purine salvage pathway enzyme that catalyzes the transfer of the ribosyl-5-phosphate group from 5-phospho-alpha-D-ribose 1-diphosphate (PRPP) to the N9 position of the 6-oxopurines guanine and xanthine to form the corresponding ribonucleotides GMP (guanosine 5'-monophosphate) and XMP (xanthosine 5'-monophosphate), with the release of PPi. To a lesser extent, also acts on hypoxanthine. The protein is Xanthine-guanine phosphoribosyltransferase of Nitrobacter hamburgensis (strain DSM 10229 / NCIMB 13809 / X14).